The chain runs to 228 residues: MYDIRQWRHVFKLDPNKGISDEQLERICESGTDAVIVGGTDDVTLENVLELLARIRRFSVPCVLEISNLESVTPGFDFYFVPMVLNSREKKWIIDLHHEAVKQFGDIMNWDEIFMEGYCILHKNCKAAMLTDANTELQEDDVVAYARIAEHMYRLPIFYLEYSGSYGNPELVQRVKQVLKQTQLFYGGGIETEKQAKEMAQYADTIVVGNVIYEDIKKALATVKAVKQ.

Lys12 is a sn-glycerol 1-phosphate binding site. Asp14 and Thr40 together coordinate Mg(2+). Residues Tyr159–Gly164, Gly189, and Gly209–Asn210 contribute to the sn-glycerol 1-phosphate site.

This sequence belongs to the GGGP/HepGP synthase family. Group I subfamily. In terms of assembly, homodimer. Requires Mg(2+) as cofactor.

It catalyses the reaction sn-glycerol 1-phosphate + all-trans-heptaprenyl diphosphate = 3-heptaprenyl-sn-glycero-1-phosphate + diphosphate. It participates in membrane lipid metabolism; glycerophospholipid metabolism. In terms of biological role, prenyltransferase that catalyzes in vivo the transfer of the heptaprenyl moiety of heptaprenyl pyrophosphate (HepPP; 35 carbon atoms) to the C3 hydroxyl of sn-glycerol-1-phosphate (G1P), producing heptaprenylglyceryl phosphate (HepGP). This reaction is an ether-bond-formation step in the biosynthesis of archaea-type G1P-based membrane lipids found in Bacillales. This is Heptaprenylglyceryl phosphate synthase from Geobacillus sp. (strain WCH70).